The sequence spans 631 residues: Tumor protein p73 (631 aa).

The tract at residues 1 to 43 is transactivation; it reads MAQTSSSSSSTFEHLWSSLEPDSTYFDLPQPSQGTSEASGSEE. Disordered stretches follow at residues 23 to 43 and 69 to 113; these read STYFDLPQPSQGTSEASGSEE and SRAA…NTDY. At Thr24 the chain carries Phosphothreonine; by PLK1. Tyr25 carries the post-translational modification Phosphotyrosine; by SRC and HCK. Composition is skewed to polar residues over residues 30-43 and 86-100; these read QPSQGTSEASGSEE and PTHSPYAQPSSTFDT. Tyr91 carries the phosphotyrosine; by ABL1 modification. The segment at 123 to 302 is DNA-binding; that stretch reads FQQSSTAKSA…DRKADEDHYR (180 aa). Zn(2+) contacts are provided by Cys186, His189, Cys250, and Cys254. A compositionally biased stretch (polar residues) spans 306–315; sequence ALNESTTKNG. A disordered region spans residues 306 to 334; it reads ALNESTTKNGAASKRAFKQSPPAIPALGT. Residues 337–372 are interaction with HIPK2; that stretch reads KKRRHGDEDMFYMHVRGRENFEILMKVKESLELMEL. The oligomerization stretch occupies residues 337–378; it reads KKRRHGDEDMFYMHVRGRENFEILMKVKESLELMELVPQPLV. The short motif at 477–481 is the PPxY motif element; it reads PPPPY. The 67-residue stretch at 479-545 folds into the SAM domain; the sequence is PPYHADPSLV…WRGLQDLKQS (67 aa). Residue Lys622 forms a Glycyl lysine isopeptide (Lys-Gly) (interchain with G-Cter in SUMO); alternate linkage. Lys622 participates in a covalent cross-link: Glycyl lysine isopeptide (Lys-Gly) (interchain with G-Cter in SUMO2); alternate.

It belongs to the p53 family. In terms of assembly, found in a complex with p53/TP53 and CABLES1. The C-terminal oligomerization domain binds to the ABL1 tyrosine kinase SH3 domain. Interacts with HECW2, HIPK2, RANBP9 and WWOX. Interacts (via SAM domain) with FBXO45 (via B30.2/SPRY domain). Interacts with YAP1 (phosphorylated form). Interacts with HCK (via SH3 domain); this inhibits TP73 activity and degradation. Interacts (via SAM domain) with NQO1; this interaction is NADH-dependent, stabilizes TP73 in response to oxidative stress and protects it from ubiquitin-independent degradation by the 20S proteasome. Zn(2+) serves as cofactor. Sumoylated on Lys-622, which potentiates proteasomal degradation but does not affect transcriptional activity. In terms of processing, phosphorylation by PLK1 and PLK3 inhibits the transcription regulator activity and pro-apoptotic function. Higher levels of phosphorylation seen in striatal neurons of. mutant huntingtin (htt) transgenic mice. Post-translationally, polyubiquitinated by RCHY1/PIRH2; leading to its degradation by the proteasome. As to expression, found in striatal neurons of mutant huntingtin (htt) transgenic mice (at protein level). Isoform 1 is expressed in the nasal epithelium, the vomeronasal organ, the hippocampus and the hypothalamus.

It is found in the nucleus. The protein localises to the cytoplasm. Participates in the apoptotic response to DNA damage. Isoforms containing the transactivation domain are pro-apoptotic, isoforms lacking the domain are anti-apoptotic and block the function of p53 and transactivating p73 isoforms. May be a tumor suppressor protein. Is an activator of FOXJ1 expression, essential for the positive regulation of lung ciliated cell differentiation. This is Tumor protein p73 (Tp73) from Mus musculus (Mouse).